The sequence spans 168 residues: Thiol peroxidase (168 aa).

A Thioredoxin domain is found at 20–168 (PAVGSQLPAF…DYDKALAALA (149 aa)). The active-site Cysteine sulfenic acid (-SOH) intermediate is Cys62. A disulfide bridge connects residues Cys62 and Cys96.

This sequence belongs to the peroxiredoxin family. Tpx subfamily. As to quaternary structure, homodimer.

It carries out the reaction a hydroperoxide + [thioredoxin]-dithiol = an alcohol + [thioredoxin]-disulfide + H2O. Its function is as follows. Thiol-specific peroxidase that catalyzes the reduction of hydrogen peroxide and organic hydroperoxides to water and alcohols, respectively. Plays a role in cell protection against oxidative stress by detoxifying peroxides. The chain is Thiol peroxidase from Chlorobaculum tepidum (strain ATCC 49652 / DSM 12025 / NBRC 103806 / TLS) (Chlorobium tepidum).